Reading from the N-terminus, the 1171-residue chain is Pyruvate:ferredoxin oxidoreductase (1171 aa).

Residues Thr-29 and Arg-112 each contribute to the pyruvate site. Residues 424-428 (SDGTV), Lys-456, Asn-556, and Asn-598 each bind CoA. 4Fe-4S ferredoxin-type domains follow at residues 677–706 (NIPQ…PYLA) and 733–764 (FRIQ…MVPL). Residues Cys-686, Cys-689, Cys-692, Cys-696, Cys-742, Cys-745, Cys-748, Cys-752, Cys-809, and Cys-812 each contribute to the [4Fe-4S] cluster site. Thiamine diphosphate-binding positions include Glu-814, Cys-837, 967 to 969 (DGW), and 995 to 1000 (TEVYSN). Cys-837 contributes to the [4Fe-4S] cluster binding site. Positions 967, 995, and 997 each coordinate Mg(2+). Residue Asn-1000 coordinates pyruvate. Residue Cys-1075 coordinates [4Fe-4S] cluster.

The protein belongs to the pyruvate:ferredoxin/flavodoxin oxidoreductase family. As to quaternary structure, homodimer. [4Fe-4S] cluster serves as cofactor. It depends on thiamine diphosphate as a cofactor. Mg(2+) is required as a cofactor.

The enzyme catalyses 2 oxidized [2Fe-2S]-[ferredoxin] + pyruvate + CoA = 2 reduced [2Fe-2S]-[ferredoxin] + acetyl-CoA + CO2 + H(+). Catalyzes the oxidative decarboxylation of pyruvate to acetyl-CoA and carbon dioxide. The two electrons that are generated as a result of pyruvate decarboxylation are used in the reduction of low potential ferredoxins, which provide reducing equivalents for central metabolism. Also catalyzes the reverse reaction, i.e. the synthesis of pyruvate from acetyl-CoA and carbon dioxide. Appears to function physiologically in both directions. The oxidation of pyruvate by PFOR is required to connect glycolysis and the Wood-Ljungdahl pathway of reductive acetogenesis. The conversion of acetyl-CoA to pyruvate links the Wood-Ljungdahl pathway of autotrophic CO2 fixation to the reductive tricarboxylic acid cycle. Can use methyl viologen as electron carrier in vitro. This is Pyruvate:ferredoxin oxidoreductase from Moorella thermoacetica (strain ATCC 39073 / JCM 9320).